The following is an 898-amino-acid chain: Nitrate reductase [NAD(P)H] (898 aa).

A compositionally biased stretch (basic and acidic residues) spans 1–15; that stretch reads MAASVENRRFTHHEP. Positions 1 to 65 are disordered; sequence MAASVENRRF…SSSEDENEND (65 aa). C180 contacts Mo-molybdopterin. The Cytochrome b5 heme-binding domain maps to 528-603; the sequence is SKMFSMSEVK…LEDYRIGELI (76 aa). Heme is bound by residues H563 and H586. An FAD-binding FR-type domain is found at 642 to 754; that stretch reads GAKIPTKLVY…KGPLGHVEYT (113 aa). Residues 694–697, 711–715, F716, F723, 728–730, and T781 contribute to the FAD site; these read RAYT, VVKIY, and LMS.

This sequence belongs to the nitrate reductase family. In terms of assembly, homodimer. FAD serves as cofactor. Requires heme as cofactor. The cofactor is Mo-molybdopterin.

It catalyses the reaction nitrite + NAD(+) + H2O = nitrate + NADH + H(+). The catalysed reaction is nitrite + NADP(+) + H2O = nitrate + NADPH + H(+). Its function is as follows. Nitrate reductase is a key enzyme involved in the first step of nitrate assimilation in plants, fungi and bacteria. The chain is Nitrate reductase [NAD(P)H] (NIA1) from Betula pendula (European white birch).